A 150-amino-acid chain; its full sequence is MQIILLDKVVNLGNLGQIVKVKDGYARNFLIPTGRARRATEAAKAEFEAKRAELEKTAATNLAQAQAQGEKLAGTAIKLTQKAGVDGRLFGSVTNHDIAEELNKQGFKLAKSRIRLPNGPIKMVGDNTVSVVLHTDVVVEVIVSVYGETA.

Belongs to the bacterial ribosomal protein bL9 family.

Binds to the 23S rRNA. This is Large ribosomal subunit protein bL9 from Verminephrobacter eiseniae (strain EF01-2).